We begin with the raw amino-acid sequence, 343 residues long: Ferredoxin--NADP reductase (343 aa).

D36, Q44, Y49, V89, F124, D289, and T330 together coordinate FAD.

The protein belongs to the ferredoxin--NADP reductase type 2 family. As to quaternary structure, homodimer. The cofactor is FAD.

The enzyme catalyses 2 reduced [2Fe-2S]-[ferredoxin] + NADP(+) + H(+) = 2 oxidized [2Fe-2S]-[ferredoxin] + NADPH. This is Ferredoxin--NADP reductase from Mesorhizobium japonicum (strain LMG 29417 / CECT 9101 / MAFF 303099) (Mesorhizobium loti (strain MAFF 303099)).